Here is a 403-residue protein sequence, read N- to C-terminus: S-arrestin (403 aa).

Positions 11-19 (HVIFKKVSR) are interaction with RHO. Threonine 231 carries the post-translational modification Phosphothreonine. The segment at 381–403 (RQNLKDTGENTEGKKDEDAGQDE) is disordered.

This sequence belongs to the arrestin family. Monomer. Homodimer. Homotetramer. Interacts with RHO (via the phosphorylated C-terminus). Detected in retina (at protein level).

The protein localises to the cell projection. Its subcellular location is the cilium. It localises to the photoreceptor outer segment. It is found in the membrane. Functionally, binds to photoactivated, phosphorylated RHO and terminates RHO signaling via G-proteins by competing with G-proteins for the same binding site on RHO. May play a role in preventing light-dependent degeneration of retinal photoreceptor cells. The polypeptide is S-arrestin (Sag) (Mus musculus (Mouse)).